The following is a 464-amino-acid chain: Mitogen-activated protein kinase 10 (464 aa).

The 296-residue stretch at 64–359 (YQNLKPIGSG…VDDALQHPYI (296 aa)) folds into the Protein kinase domain. ATP-binding positions include 70–78 (IGSGAQGIV) and lysine 93. The Proton acceptor role is filled by aspartate 189. Threonine 221 carries the phosphothreonine; by MAP2K7 modification. The TXY signature appears at 221 to 223 (TPY). Tyrosine 223 carries the phosphotyrosine; by MAP2K4 modification. A disordered region spans residues 405 to 464 (TKNGVVKGQPSPSGAAVNSSESLPPSSSVNDISSMSTDQTLASDTDSSLEASAGPLGCCR). The span at 423–432 (SSESLPPSSS) shows a compositional bias: low complexity. The span at 433–454 (VNDISSMSTDQTLASDTDSSLE) shows a compositional bias: polar residues. S-palmitoyl cysteine attachment occurs at residues cysteine 462 and cysteine 463.

It belongs to the protein kinase superfamily. CMGC Ser/Thr protein kinase family. MAP kinase subfamily. Interacts with MAPK8IP1/JIP-1 and MAPK8IP3/JIP-3/JSAP1. Interacts with SPAG9/MAPK8IP4/JIP4. Interacts with HDAC9 and MAPKBP1. Interacts with ARRB2; the interaction enhances MAPK10 activation by MAP3K5. Interacts with SARM1. Interacts with JUND; interaction is inhibited in the presence of MEN1. Mg(2+) is required as a cofactor. In terms of processing, dually phosphorylated on Thr-221 and Tyr-223 by MAP2K4 and MAP2K7, which activates the enzyme. MAP2K7 shows a strong preference for Thr-221 while MAP2K4 phosphorylates Tyr-223 preferentially. Weakly autophosphorylated on threonine and tyrosine residues in vitro. Palmitoylation regulates subcellular location and axonal development.

It is found in the cytoplasm. The protein localises to the membrane. The protein resides in the nucleus. It localises to the mitochondrion. It carries out the reaction L-seryl-[protein] + ATP = O-phospho-L-seryl-[protein] + ADP + H(+). The enzyme catalyses L-threonyl-[protein] + ATP = O-phospho-L-threonyl-[protein] + ADP + H(+). With respect to regulation, activated by threonine and tyrosine phosphorylation by two dual specificity kinases, MAP2K4 and MAP2K7. MAP2K7 phosphorylates MAPK10 on Thr-221 causing a conformational change and a large increase in Vmax for the enzyme. MAP2K4 then phosphorylates Tyr-223 resulting in a further increase in Vmax. Inhibited by dual specificity phosphatases, such as DUSP1. Inhibited by HDAC9. Serine/threonine-protein kinase involved in various processes such as neuronal proliferation, differentiation, migration and programmed cell death. Extracellular stimuli such as pro-inflammatory cytokines or physical stress stimulate the stress-activated protein kinase/c-Jun N-terminal kinase (SAP/JNK) signaling pathway. In this cascade, two dual specificity kinases MAP2K4/MKK4 and MAP2K7/MKK7 phosphorylate and activate MAPK10/JNK3. In turn, MAPK10/JNK3 phosphorylates a number of transcription factors, primarily components of AP-1 such as JUN and ATF2 and thus regulates AP-1 transcriptional activity. Plays regulatory roles in the signaling pathways during neuronal apoptosis. Phosphorylates the neuronal microtubule regulator STMN2. Acts in the regulation of the amyloid-beta precursor protein/APP signaling during neuronal differentiation by phosphorylating APP. Also participates in neurite growth in spiral ganglion neurons. Phosphorylates the CLOCK-BMAL1 heterodimer and plays a role in the photic regulation of the circadian clock. Phosphorylates JUND and this phosphorylation is inhibited in the presence of MEN1. This chain is Mitogen-activated protein kinase 10 (Mapk10), found in Rattus norvegicus (Rat).